Consider the following 198-residue polypeptide: Inner membrane-spanning protein YciB (198 aa).

A run of 5 helical transmembrane segments spans residues Ile36 to Leu56, Leu67 to Phe87, Trp90 to Gly110, Leu133 to Phe153, and Phe162 to Leu182.

Belongs to the YciB family.

The protein localises to the cell inner membrane. Functionally, plays a role in cell envelope biogenesis, maintenance of cell envelope integrity and membrane homeostasis. This Pseudomonas savastanoi pv. phaseolicola (strain 1448A / Race 6) (Pseudomonas syringae pv. phaseolicola (strain 1448A / Race 6)) protein is Inner membrane-spanning protein YciB.